The chain runs to 148 residues: Prefoldin subunit 2 (148 aa).

Residues 87–114 (KDGLEEVVRKLYETLEKKKKDLTEFEAK) are a coiled coil. The segment covering 122–134 (QEDNKEGGNKKEG) has biased composition (basic and acidic residues). Residues 122 to 148 (QEDNKEGGNKKEGNAQGVLVGAASSSQ) are disordered.

Belongs to the prefoldin subunit beta family. Heterohexamer of two PFD-alpha type and four PFD-beta type subunits forming prefoldin co-chaperone complex. Interacts with LSM8, a specific subunit of the LSM2-8 complex, which is a core component of the spliceosome.

It is found in the cytoplasm. Its subcellular location is the nucleus. In terms of biological role, binds specifically to cytosolic chaperonin (c-CPN) and transfers target proteins to it. Binds to nascent polypeptide chain and promotes folding in an environment in which there are many competing pathways for nonnative proteins. Together with other chaperonins, contribute to the regulation of gene expression by modulating the spliceosome function on pre-mRNA splicing post-transcriptionally by acting as a co-chaperone of Hsp90 to control levels of LSM8. Required for microtubules (MTs) organization and dynamicity. Involved in the process leading to microtubules dissociation in response to gibberellic acid (GA) probably due to the DELLA proteins-mediated translocation of the prefoldin co-chaperone complex from the cytoplasm to the nucleus. The polypeptide is Prefoldin subunit 2 (Arabidopsis thaliana (Mouse-ear cress)).